The following is a 944-amino-acid chain: UvrABC system protein A (944 aa).

An ATP-binding site is contributed by 33–40 (GLSGSGKS). Residues 252–279 (CPICGFSIGELEPRMFSFNSPFGACPTC) form a C4-type zinc finger. ABC transporter domains are found at residues 309–587 (WEPT…KKSL) and 607–935 (ITDR…QYLK). Residue 639–646 (GVSGSGKS) participates in ATP binding. The C4-type zinc-finger motif lies at 738–764 (CEACKGDGIIKIEMHFLPDVYVPCEVC).

Belongs to the ABC transporter superfamily. UvrA family. Forms a heterotetramer with UvrB during the search for lesions.

The protein resides in the cytoplasm. In terms of biological role, the UvrABC repair system catalyzes the recognition and processing of DNA lesions. UvrA is an ATPase and a DNA-binding protein. A damage recognition complex composed of 2 UvrA and 2 UvrB subunits scans DNA for abnormalities. When the presence of a lesion has been verified by UvrB, the UvrA molecules dissociate. This chain is UvrABC system protein A, found in Staphylococcus epidermidis (strain ATCC 12228 / FDA PCI 1200).